The following is a 267-amino-acid chain: 4-hydroxy-tetrahydrodipicolinate reductase (267 aa).

Residues 10–15 and Glu-36 each bind NAD(+); that span reads GCGGRM. Arg-37 is a binding site for NADP(+). Residues 99–101 and 123–126 each bind NAD(+); these read GTT and APNF. His-156 serves as the catalytic Proton donor/acceptor. His-157 is a (S)-2,3,4,5-tetrahydrodipicolinate binding site. The active-site Proton donor is the Lys-160. Position 166 to 167 (166 to 167) interacts with (S)-2,3,4,5-tetrahydrodipicolinate; the sequence is GT.

It belongs to the DapB family.

The protein localises to the cytoplasm. It carries out the reaction (S)-2,3,4,5-tetrahydrodipicolinate + NAD(+) + H2O = (2S,4S)-4-hydroxy-2,3,4,5-tetrahydrodipicolinate + NADH + H(+). The catalysed reaction is (S)-2,3,4,5-tetrahydrodipicolinate + NADP(+) + H2O = (2S,4S)-4-hydroxy-2,3,4,5-tetrahydrodipicolinate + NADPH + H(+). It participates in amino-acid biosynthesis; L-lysine biosynthesis via DAP pathway; (S)-tetrahydrodipicolinate from L-aspartate: step 4/4. Functionally, catalyzes the conversion of 4-hydroxy-tetrahydrodipicolinate (HTPA) to tetrahydrodipicolinate. This Laribacter hongkongensis (strain HLHK9) protein is 4-hydroxy-tetrahydrodipicolinate reductase.